The following is a 246-amino-acid chain: Purine nucleoside phosphorylase Cgl2154/cg2365 (246 aa).

Zn(2+) is bound by residues histidine 68, cysteine 107, and histidine 124.

Belongs to the purine nucleoside phosphorylase YfiH/LACC1 family. In terms of assembly, homodimer. It depends on Cu(2+) as a cofactor. Zn(2+) serves as cofactor.

The catalysed reaction is adenosine + phosphate = alpha-D-ribose 1-phosphate + adenine. It catalyses the reaction S-methyl-5'-thioadenosine + phosphate = 5-(methylsulfanyl)-alpha-D-ribose 1-phosphate + adenine. It carries out the reaction inosine + phosphate = alpha-D-ribose 1-phosphate + hypoxanthine. The enzyme catalyses adenosine + H2O + H(+) = inosine + NH4(+). Functionally, purine nucleoside enzyme that catalyzes the phosphorolysis of adenosine and inosine nucleosides, yielding D-ribose 1-phosphate and the respective free bases, adenine and hypoxanthine. Also catalyzes the phosphorolysis of S-methyl-5'-thioadenosine into adenine and S-methyl-5-thio-alpha-D-ribose 1-phosphate. Also has adenosine deaminase activity. This is Purine nucleoside phosphorylase Cgl2154/cg2365 from Corynebacterium glutamicum (strain ATCC 13032 / DSM 20300 / JCM 1318 / BCRC 11384 / CCUG 27702 / LMG 3730 / NBRC 12168 / NCIMB 10025 / NRRL B-2784 / 534).